The following is a 592-amino-acid chain: Colicin-A (592 aa).

Gly residues-rich tracts occupy residues M1–T13 and P23–G34. Disordered regions lie at residues M1–S57 and R373–D395. The next 2 membrane-spanning stretches (helical) occupy residues W528–A548 and V555–I575.

The protein belongs to the channel forming colicin family.

The protein resides in the cell membrane. Its function is as follows. This colicin is a channel-forming colicin. This class of transmembrane toxins depolarize the cytoplasmic membrane, leading to dissipation of cellular energy. In terms of biological role, colicins are polypeptide toxins produced by and active against E.coli and closely related bacteria. The protein is Colicin-A (caa) of Citrobacter freundii.